The following is a 263-amino-acid chain: Insulin-like growth factor-binding protein 1 (263 aa).

An N-terminal signal peptide occupies residues 1-25 (MPEVLAVRAWPLLLSLAVQLGATVG). The IGFBP N-terminal domain occupies 28–109 (QPWRCAPCSA…TRGQGACMTT (82 aa)). 6 disulfide bridges follow: C32–C59, C35–C61, C43–C62, C50–C65, C73–C86, and C80–C106. Residues 102–131 (GQGACMTTPSDEATDTKDTTSPENVSPESS) are disordered. Residues S122, S127, S130, S148, and S160 each carry the phosphoserine modification. Residues 122 to 131 (SPENVSPESS) show a composition bias toward polar residues. Y162 carries the phosphotyrosine modification. The 79-residue stretch at 177 to 255 (KEPCQRELYK…SVAVRGDPKC (79 aa)) folds into the Thyroglobulin type-1 domain. Cystine bridges form between C180–C210, C221–C232, and C234–C255. Phosphoserine is present on S246. Residues 250–252 (RGD) carry the Cell attachment site motif.

As to quaternary structure, binds equally well IGF1 and IGF2. Interacts with integrin ITGA5:ITGB1. Interacts with VHL; this interaction inhibits HIF1A degradation.

Its subcellular location is the secreted. Multifunctional protein that plays a critical role in regulating the availability of IGFs such as IGF1 and IGF2 to their receptors and thereby regulates IGF-mediated cellular processes including cell migration, proliferation, differentiation or apoptosis in a cell-type specific manner. Also plays a positive role in cell migration by interacting with integrin ITGA5:ITGB1 through its RGD motif. Mechanistically, binding to integrins leads to activation of focal adhesion kinase/PTK2 and stimulation of the mitogen-activated protein kinase (MAPK) pathway. Regulates cardiomyocyte apoptosis by suppressing HIF-1alpha/HIF1A degradation through ubiquitination. This is Insulin-like growth factor-binding protein 1 (IGFBP1) from Bos taurus (Bovine).